The chain runs to 345 residues: Histidinol-phosphate aminotransferase (345 aa).

The residue at position 206 (K206) is an N6-(pyridoxal phosphate)lysine.

Belongs to the class-II pyridoxal-phosphate-dependent aminotransferase family. Histidinol-phosphate aminotransferase subfamily. Homodimer. Pyridoxal 5'-phosphate serves as cofactor.

It catalyses the reaction L-histidinol phosphate + 2-oxoglutarate = 3-(imidazol-4-yl)-2-oxopropyl phosphate + L-glutamate. Its pathway is amino-acid biosynthesis; L-histidine biosynthesis; L-histidine from 5-phospho-alpha-D-ribose 1-diphosphate: step 7/9. In Bacteroides fragilis (strain ATCC 25285 / DSM 2151 / CCUG 4856 / JCM 11019 / LMG 10263 / NCTC 9343 / Onslow / VPI 2553 / EN-2), this protein is Histidinol-phosphate aminotransferase.